A 416-amino-acid polypeptide reads, in one-letter code: Pectin acetylesterase 3 (416 aa).

Residues 1-25 (MKSVLRIAAAIFWLWLFIVLGVIGS) form the signal peptide. Asn131 carries N-linked (GlcNAc...) asparagine glycosylation. Residues Ser198 and Asp294 each act as charge relay system in the active site. N-linked (GlcNAc...) asparagine glycosylation is present at Asn324. His361 acts as the Charge relay system in catalysis.

This sequence belongs to the pectinacetylesterase family.

It is found in the secreted. The protein localises to the cell wall. In terms of biological role, hydrolyzes acetyl esters in homogalacturonan regions of pectin. In type I primary cell wall, galacturonic acid residues of pectin can be acetylated at the O-2 and O-3 positions. Decreasing the degree of acetylation of pectin gels in vitro alters their physical properties. In Arabidopsis thaliana (Mouse-ear cress), this protein is Pectin acetylesterase 3.